The chain runs to 533 residues: Putative phosphate permease jhp_1384 (533 aa).

The next 12 helical transmembrane spans lie at 23 to 43, 47 to 67, 81 to 101, 129 to 149, 156 to 176, 182 to 202, 221 to 241, 248 to 268, 286 to 306, 338 to 358, 372 to 392, and 509 to 529; these read IALALLFLIGAALLALIFGQA, GLLLIFAAVIGGYMAMNIGAN, AISMGGAILIAAVCEMLGAII, VMLASLLSGALWLHVATLIGA, SVVGGIMGAGMAAAGMSAINW, IVASWVISPLMGALIAMFFLM, VVPYLVALMSLAFSWYLIVKV, VGFEIQLACGCVLALLIFILF, VNELFNVPLIFAAALLSFAHG, VPLWIMVVGAAGIALGLSLYG, LDKMQAFCIALSAVITVLLAS, and LVTVPVSALLGALLFVALGFI.

It belongs to the inorganic phosphate transporter (PiT) (TC 2.A.20) family.

The protein resides in the cell membrane. Potential transporter for phosphate. The chain is Putative phosphate permease jhp_1384 from Helicobacter pylori (strain J99 / ATCC 700824) (Campylobacter pylori J99).